A 2282-amino-acid polypeptide reads, in one-letter code: Protein Ycf2 (2282 aa).

1637 to 1644 contributes to the ATP binding site; that stretch reads GSIGTGRS.

The protein belongs to the Ycf2 family.

Its subcellular location is the plastid. The protein resides in the chloroplast stroma. In terms of biological role, probable ATPase of unknown function. Its presence in a non-photosynthetic plant (Epifagus virginiana) and experiments in tobacco indicate that it has an essential function which is probably not related to photosynthesis. The polypeptide is Protein Ycf2 (Citrus sinensis (Sweet orange)).